The following is a 311-amino-acid chain: Malate dehydrogenase (311 aa).

Residues 7-13 (GAAGGIG) and D34 contribute to the NAD(+) site. Residues R81 and R87 each contribute to the substrate site. NAD(+) contacts are provided by residues N94 and 117–119 (ITN). 2 residues coordinate substrate: N119 and R153. H177 serves as the catalytic Proton acceptor. Position 227 (M227) interacts with NAD(+).

The protein belongs to the LDH/MDH superfamily. MDH type 1 family. As to quaternary structure, homodimer.

It carries out the reaction (S)-malate + NAD(+) = oxaloacetate + NADH + H(+). Catalyzes the reversible oxidation of malate to oxaloacetate. This Aliivibrio fischeri (strain ATCC 700601 / ES114) (Vibrio fischeri) protein is Malate dehydrogenase.